Here is a 253-residue protein sequence, read N- to C-terminus: tRNA pseudouridine synthase A (253 aa).

Asp52 (nucleophile) is an active-site residue. Tyr110 serves as a coordination point for substrate.

This sequence belongs to the tRNA pseudouridine synthase TruA family. In terms of assembly, homodimer.

The catalysed reaction is uridine(38/39/40) in tRNA = pseudouridine(38/39/40) in tRNA. Functionally, formation of pseudouridine at positions 38, 39 and 40 in the anticodon stem and loop of transfer RNAs. The chain is tRNA pseudouridine synthase A from Thermus thermophilus (strain ATCC BAA-163 / DSM 7039 / HB27).